We begin with the raw amino-acid sequence, 790 residues long: Mitochondrial intermediate peptidase (790 aa).

Residues 1–29 (MLKRLARNNSSPWICSRCLQQSQRQRRFN) constitute a mitochondrion transit peptide. A Zn(2+)-binding site is contributed by histidine 570. Residue glutamate 571 is part of the active site. Zn(2+) contacts are provided by histidine 574 and histidine 577.

The protein belongs to the peptidase M3 family. Zn(2+) is required as a cofactor.

It localises to the mitochondrion matrix. The catalysed reaction is Release of an N-terminal octapeptide as second stage of processing of some proteins imported into the mitochondrion.. Its function is as follows. Cleaves proteins, imported into the mitochondrion, to their mature size. While most mitochondrial precursor proteins are processed to the mature form in one step by mitochondrial processing peptidase (MPP), the sequential cleavage by MIP of an octapeptide after initial processing by MPP is a required step for a subgroup of nuclear-encoded precursor proteins destined for the matrix or the inner membrane. The sequence is that of Mitochondrial intermediate peptidase (OCT1) from Phaeosphaeria nodorum (strain SN15 / ATCC MYA-4574 / FGSC 10173) (Glume blotch fungus).